We begin with the raw amino-acid sequence, 404 residues long: 11-beta-hydroxysteroid dehydrogenase type 2 (404 aa).

82-111 (TRAVLITGCDSGFGNATAKKLDTMGFTVLA) lines the NAD(+) pocket. Residue Ser219 coordinates substrate. Tyr232 acts as the Proton acceptor in catalysis. The disordered stretch occupies residues 383-404 (LTSARDIAQDQGPRPDPSPTAQ).

This sequence belongs to the short-chain dehydrogenases/reductases (SDR) family. Interacts with ligand-free cytoplasmic NR3C2. Highly expressed in kidney, adrenal and colon; detected at lower levels on lung, liver, and spleen. Expressed in oocytes. Expressed in uterine tissues and in corpora lutea.

The protein resides in the microsome. It localises to the endoplasmic reticulum. The catalysed reaction is an 11beta-hydroxysteroid + NAD(+) = an 11-oxosteroid + NADH + H(+). It catalyses the reaction corticosterone + NAD(+) = 11-dehydrocorticosterone + NADH + H(+). The enzyme catalyses cortisol + NAD(+) = cortisone + NADH + H(+). It carries out the reaction 11beta,17beta-dihydroxyandrost-4-ene-3-one + NAD(+) = 17beta-hydroxyandrost-4-ene-3,11-dione + NADH + H(+). The catalysed reaction is 11beta-hydroxyandrost-4-ene-3,17-dione + NAD(+) = androst-4-ene-3,11,17-trione + NADH + H(+). It functions in the pathway steroid metabolism. Inhibited by glycyrrhetinic acid, carbenoloxone, 11-alpha-OH-progesterone and 11-beta-OH-progesterone. Its function is as follows. Catalyzes the conversion of biologically active 11beta-hydroxyglucocorticoids (11beta-hydroxysteroid) such as cortisol, to inactive 11-ketoglucocorticoids (11-oxosteroid) such as cortisone, in the presence of NAD(+). Functions as a dehydrogenase (oxidase), thereby decreasing the concentration of active glucocorticoids, thus protecting the nonselective mineralocorticoid receptor from occupation by glucocorticoids. Affinity towards corticosterone is higher than cortisol or dexamethasone. Plays an important role in maintaining glucocorticoids balance during preimplantation and protects the fetus from excessive maternal corticosterone exposure. Catalyzes the oxidation of 11beta-hydroxytestosterone (11beta,17beta-dihydroxyandrost-4-ene-3-one) to 11-ketotestosterone (17beta-hydroxyandrost-4-ene-3,11-dione), a major bioactive androgen. Catalyzes the conversion of 11beta-hydroxyandrostenedione (11beta-hydroxyandrost-4-ene-3,17-dione) to 11-ketoandrostenedione (androst-4-ene-3,11,17-trione), which can be further metabolized to 11-ketotestosterone. Converts 7-beta-25-dihydroxycholesterol to 7-oxo-25-hydroxycholesterol in vitro. 7-beta-25-dihydroxycholesterol (not 7-oxo-25-hydroxycholesterol) acts as ligand for the G-protein-coupled receptor (GPCR) Epstein-Barr virus-induced gene 2 (EBI2) and may thereby regulate immune cell migration. May protect ovulating oocytes and fertilizing spermatozoa from the adverse effects of cortisol. The polypeptide is 11-beta-hydroxysteroid dehydrogenase type 2 (HSD11B2) (Bos taurus (Bovine)).